The chain runs to 225 residues: Octanoyltransferase (225 aa).

Positions 42–219 (KNRQASMIFC…SICSALEYIN (178 aa)) constitute a BPL/LPL catalytic domain. Substrate-binding positions include 79-86 (RGGKITWH), 149-151 (AIG), and 162-164 (GFA). Catalysis depends on Cys180, which acts as the Acyl-thioester intermediate.

The protein belongs to the LipB family.

The protein resides in the cytoplasm. It carries out the reaction octanoyl-[ACP] + L-lysyl-[protein] = N(6)-octanoyl-L-lysyl-[protein] + holo-[ACP] + H(+). It functions in the pathway protein modification; protein lipoylation via endogenous pathway; protein N(6)-(lipoyl)lysine from octanoyl-[acyl-carrier-protein]: step 1/2. Functionally, catalyzes the transfer of endogenously produced octanoic acid from octanoyl-acyl-carrier-protein onto the lipoyl domains of lipoate-dependent enzymes. Lipoyl-ACP can also act as a substrate although octanoyl-ACP is likely to be the physiological substrate. This is Octanoyltransferase from Tropheryma whipplei (strain TW08/27) (Whipple's bacillus).